The sequence spans 887 residues: Alpha-amylase 3, chloroplastic (887 aa).

Residues 1–55 (MSTVPIESLLHHSYLRHNSKVNRGNRSFIPISLNLRSHFTSNKLLHSIGKSVGVS) constitute a chloroplast transit peptide. The cysteines at positions 499 and 587 are disulfide-linked. Substrate is bound by residues 545–546 (YM) and 664–669 (RLDFVR). Asp666 (nucleophile) is an active-site residue. Glu691 (proton donor) is an active-site residue. Substrate is bound by residues Trp693, Ser695, Gln712, Lys754, 760 to 762 (GWW), His773, Gln779, Lys857, and Trp884.

Belongs to the glycosyl hydrolase 13 family. Ca(2+) is required as a cofactor. In terms of tissue distribution, expressed in developing siliques.

Its subcellular location is the plastid. It is found in the chloroplast. It carries out the reaction Endohydrolysis of (1-&gt;4)-alpha-D-glucosidic linkages in polysaccharides containing three or more (1-&gt;4)-alpha-linked D-glucose units.. Its activity is regulated as follows. Redox-regulated, with the highest activity under reducing conditions. The midpoint redox potential is -329 mV. The disulfide bridge between Cys-499 and Cys-587 inhibits catalysis. Inhibited by CuCl(2) and H(2)O(2). In terms of biological role, possesses endoamylolytic activity in vitro, but seems not required for breakdown of transitory starch in leaves. May be involved in the determination of the final structure of glucans by shortening long linear phospho-oligosaccharides in the chloroplast stroma. Can act on both soluble and insoluble glucan substrates to release small linear and branched malto-oligosaccharides. Works synergistically with beta-amylase toward efficient starch degradation. Has activity against p-nitrophenyl maltoheptaoside (BPNP-G7), amylopectin and beta-limit dextrin. Involved in stress-induced starch degradation. This chain is Alpha-amylase 3, chloroplastic, found in Arabidopsis thaliana (Mouse-ear cress).